The chain runs to 291 residues: Foldase protein PrsA 2 (291 aa).

Residues 1–20 form the signal peptide; sequence MKKKLILGLVMMMALFSLAA. C21 is lipidated: N-palmitoyl cysteine. Residue C21 is the site of S-diacylglycerol cysteine attachment. Positions 135-226 constitute a PpiC domain; the sequence is QPDITVSHIL…YGYHIIQMDK (92 aa).

The protein belongs to the PrsA family.

It localises to the cell membrane. It carries out the reaction [protein]-peptidylproline (omega=180) = [protein]-peptidylproline (omega=0). Plays a major role in protein secretion by helping the post-translocational extracellular folding of several secreted proteins. This chain is Foldase protein PrsA 2 (prsA2), found in Listeria innocua serovar 6a (strain ATCC BAA-680 / CLIP 11262).